Here is a 435-residue protein sequence, read N- to C-terminus: Serine--tRNA ligase (435 aa).

Residues 41–70 (QVKTEELQAQRNSRSKSIGQAKAKGDHEEA) are disordered. A compositionally biased stretch (polar residues) spans 49 to 58 (AQRNSRSKSI). Residue 242 to 244 (TAE) coordinates L-serine. Position 273-275 (273-275 (RSE)) interacts with ATP. Position 296 (glutamate 296) interacts with L-serine. 360-363 (EISS) is an ATP binding site. L-serine is bound at residue serine 396.

It belongs to the class-II aminoacyl-tRNA synthetase family. Type-1 seryl-tRNA synthetase subfamily. In terms of assembly, homodimer. The tRNA molecule binds across the dimer.

The protein localises to the cytoplasm. The catalysed reaction is tRNA(Ser) + L-serine + ATP = L-seryl-tRNA(Ser) + AMP + diphosphate + H(+). It catalyses the reaction tRNA(Sec) + L-serine + ATP = L-seryl-tRNA(Sec) + AMP + diphosphate + H(+). It functions in the pathway aminoacyl-tRNA biosynthesis; selenocysteinyl-tRNA(Sec) biosynthesis; L-seryl-tRNA(Sec) from L-serine and tRNA(Sec): step 1/1. Its function is as follows. Catalyzes the attachment of serine to tRNA(Ser). Is also able to aminoacylate tRNA(Sec) with serine, to form the misacylated tRNA L-seryl-tRNA(Sec), which will be further converted into selenocysteinyl-tRNA(Sec). This chain is Serine--tRNA ligase, found in Aliivibrio fischeri (strain ATCC 700601 / ES114) (Vibrio fischeri).